The following is a 200-amino-acid chain: Potassium-transporting ATPase KdpC subunit (200 aa).

Residues 9-31 (LVMLVALTALTGLVYPLAMTGVA) traverse the membrane as a helical segment. The tract at residues 68 to 97 (GRPSATTAPDPQDSSKTVPSPYNAANSMGA) is disordered. Positions 71–96 (SATTAPDPQDSSKTVPSPYNAANSMG) are enriched in polar residues.

It belongs to the KdpC family. The system is composed of three essential subunits: KdpA, KdpB and KdpC.

The protein localises to the cell inner membrane. In terms of biological role, part of the high-affinity ATP-driven potassium transport (or Kdp) system, which catalyzes the hydrolysis of ATP coupled with the electrogenic transport of potassium into the cytoplasm. This subunit acts as a catalytic chaperone that increases the ATP-binding affinity of the ATP-hydrolyzing subunit KdpB by the formation of a transient KdpB/KdpC/ATP ternary complex. The chain is Potassium-transporting ATPase KdpC subunit from Rhodopseudomonas palustris (strain BisA53).